Reading from the N-terminus, the 232-residue chain is 5'-methylthioadenosine/S-adenosylhomocysteine nucleosidase (232 aa).

Residue Glu-12 is the Proton acceptor of the active site. Substrate is bound by residues Gly-78, Ile-152, and 173–174 (ME). Catalysis depends on Asp-197, which acts as the Proton donor.

It belongs to the PNP/UDP phosphorylase family. MtnN subfamily. As to quaternary structure, homodimer.

The catalysed reaction is S-adenosyl-L-homocysteine + H2O = S-(5-deoxy-D-ribos-5-yl)-L-homocysteine + adenine. It carries out the reaction S-methyl-5'-thioadenosine + H2O = 5-(methylsulfanyl)-D-ribose + adenine. It catalyses the reaction 5'-deoxyadenosine + H2O = 5-deoxy-D-ribose + adenine. Its pathway is amino-acid biosynthesis; L-methionine biosynthesis via salvage pathway; S-methyl-5-thio-alpha-D-ribose 1-phosphate from S-methyl-5'-thioadenosine (hydrolase route): step 1/2. Functionally, catalyzes the irreversible cleavage of the glycosidic bond in both 5'-methylthioadenosine (MTA) and S-adenosylhomocysteine (SAH/AdoHcy) to adenine and the corresponding thioribose, 5'-methylthioribose and S-ribosylhomocysteine, respectively. Also cleaves 5'-deoxyadenosine, a toxic by-product of radical S-adenosylmethionine (SAM) enzymes, into 5-deoxyribose and adenine. Thus, is required for in vivo function of the radical SAM enzymes biotin synthase and lipoic acid synthase, that are inhibited by 5'-deoxyadenosine accumulation. In Salmonella dublin (strain CT_02021853), this protein is 5'-methylthioadenosine/S-adenosylhomocysteine nucleosidase.